Reading from the N-terminus, the 418-residue chain is Tyrosine--tRNA ligase (418 aa).

Tyr34 contacts L-tyrosine. The 'HIGH' region motif lies at 39–48 (PTADSLHLGH). Residues Tyr169 and Gln173 each coordinate L-tyrosine. A 'KMSKS' region motif is present at residues 229–233 (KFGKS). Residue Lys232 participates in ATP binding. The 67-residue stretch at 352–418 (LNLVDMLVTA…GKKKYAVLTY (67 aa)) folds into the S4 RNA-binding domain.

This sequence belongs to the class-I aminoacyl-tRNA synthetase family. TyrS type 1 subfamily. As to quaternary structure, homodimer.

The protein localises to the cytoplasm. It carries out the reaction tRNA(Tyr) + L-tyrosine + ATP = L-tyrosyl-tRNA(Tyr) + AMP + diphosphate + H(+). Catalyzes the attachment of tyrosine to tRNA(Tyr) in a two-step reaction: tyrosine is first activated by ATP to form Tyr-AMP and then transferred to the acceptor end of tRNA(Tyr). This Streptococcus pyogenes serotype M18 (strain MGAS8232) protein is Tyrosine--tRNA ligase.